A 307-amino-acid polypeptide reads, in one-letter code: MEGVVLLHKPKGMTSHDCVFKLRKILREKRIGHTGTLDPDVTGVLPICVGRATKIAQFLTSETKTYEGEVTLGFSTTTEDASGEVVETKNVDRTITRMEVEKVLAELTGTIEQMPPMFSAVKVNGKKLYEYARAGQEVERPVRTITIHEFVLLDDREVFEGENISFRFRVTCSKGTYVRTLAVMIGEKLGFPSHMSHLVRTASGEFLLEDCISFEEIEENVQNGTVESIFISIDEALSKFPKMVVDEKQAEKIKNGMFLKNELEITAPFITVFDKNDRCLAIYEHHPKHPGMLKPMKVLVNNQELKL.

Asp-38 acts as the Nucleophile in catalysis.

This sequence belongs to the pseudouridine synthase TruB family. Type 1 subfamily.

The enzyme catalyses uridine(55) in tRNA = pseudouridine(55) in tRNA. Responsible for synthesis of pseudouridine from uracil-55 in the psi GC loop of transfer RNAs. This chain is tRNA pseudouridine synthase B, found in Bacillus cereus (strain ATCC 14579 / DSM 31 / CCUG 7414 / JCM 2152 / NBRC 15305 / NCIMB 9373 / NCTC 2599 / NRRL B-3711).